The following is a 672-amino-acid chain: Tubulin--tyrosine ligase-like protein 12 (672 aa).

One can recognise a TTL domain in the interval Lys-332 to Thr-670. ATP-binding positions include Cys-480–Ile-483, Lys-499, and Asp-501.

Belongs to the tubulin--tyrosine ligase family.

Regulates microtubule dynamics in uterine muscle cells. The polypeptide is Tubulin--tyrosine ligase-like protein 12 (Caenorhabditis briggsae).